The chain runs to 360 residues: 3-dehydroquinate synthase (360 aa).

Residues 106-110 (GVIGD), 130-131 (TS), K143, and K152 contribute to the NAD(+) site. E185, H246, and H262 together coordinate Zn(2+).

The protein belongs to the sugar phosphate cyclases superfamily. Dehydroquinate synthase family. Requires Co(2+) as cofactor. Zn(2+) is required as a cofactor. It depends on NAD(+) as a cofactor.

The protein resides in the cytoplasm. The catalysed reaction is 7-phospho-2-dehydro-3-deoxy-D-arabino-heptonate = 3-dehydroquinate + phosphate. It functions in the pathway metabolic intermediate biosynthesis; chorismate biosynthesis; chorismate from D-erythrose 4-phosphate and phosphoenolpyruvate: step 2/7. Its function is as follows. Catalyzes the conversion of 3-deoxy-D-arabino-heptulosonate 7-phosphate (DAHP) to dehydroquinate (DHQ). The protein is 3-dehydroquinate synthase of Leuconostoc citreum (strain KM20).